A 205-amino-acid polypeptide reads, in one-letter code: Probable GTP-binding protein EngB (205 aa).

Positions 22–194 (ELPEIAFAGR…WESILDLCEI (173 aa)) constitute an EngB-type G domain. GTP is bound by residues 30 to 37 (GRSNVGKS), 57 to 61 (GRTQL), 75 to 78 (DLPG), 142 to 145 (TKAD), and 173 to 175 (FSA). Mg(2+) is bound by residues Ser-37 and Thr-59.

The protein belongs to the TRAFAC class TrmE-Era-EngA-EngB-Septin-like GTPase superfamily. EngB GTPase family. Mg(2+) serves as cofactor.

In terms of biological role, necessary for normal cell division and for the maintenance of normal septation. The sequence is that of Probable GTP-binding protein EngB from Desulfatibacillum aliphaticivorans.